We begin with the raw amino-acid sequence, 616 residues long: Chaperone protein HscA (616 aa).

It belongs to the heat shock protein 70 family.

Its function is as follows. Chaperone involved in the maturation of iron-sulfur cluster-containing proteins. Has a low intrinsic ATPase activity which is markedly stimulated by HscB. Involved in the maturation of IscU. The polypeptide is Chaperone protein HscA (Salmonella agona (strain SL483)).